Here is a 203-residue protein sequence, read N- to C-terminus: 3-isopropylmalate dehydratase small subunit (203 aa).

The protein belongs to the LeuD family. LeuD type 1 subfamily. Heterodimer of LeuC and LeuD.

It catalyses the reaction (2R,3S)-3-isopropylmalate = (2S)-2-isopropylmalate. It participates in amino-acid biosynthesis; L-leucine biosynthesis; L-leucine from 3-methyl-2-oxobutanoate: step 2/4. Its function is as follows. Catalyzes the isomerization between 2-isopropylmalate and 3-isopropylmalate, via the formation of 2-isopropylmaleate. The sequence is that of 3-isopropylmalate dehydratase small subunit from Phenylobacterium zucineum (strain HLK1).